The chain runs to 326 residues: Vitamin B12 import system permease protein BtuC (326 aa).

9 consecutive transmembrane segments (helical) span residues 15 to 35 (WLLCLSVLMLLALLLSLCAGE), 61 to 81 (LAVLLVGAALAISGAVMQALF), 88 to 108 (PGLLGVSNGAGVGLIAAVLLG), 112 to 132 (LPNWALGLCAIAGALIITLIL), 146 to 166 (LLAGVALGIICSALMTWAIYF), 184 to 204 (GGVDWRQSWLMLALIPVLLWI), 240 to 260 (GWMVGVSVALAGAIGFIGLVI), 274 to 294 (VLLPGCALAGASALLLADVVA), and 302 to 322 (ELPIGVVTATLGAPVFIWLLL).

This sequence belongs to the binding-protein-dependent transport system permease family. FecCD subfamily. The complex is composed of two ATP-binding proteins (BtuD), two transmembrane proteins (BtuC) and a solute-binding protein (BtuF).

The protein localises to the cell inner membrane. Its function is as follows. Part of the ABC transporter complex BtuCDF involved in vitamin B12 import. Involved in the translocation of the substrate across the membrane. The polypeptide is Vitamin B12 import system permease protein BtuC (Escherichia coli O17:K52:H18 (strain UMN026 / ExPEC)).